Consider the following 134-residue polypeptide: Transcription antitermination protein NusB (134 aa).

It belongs to the NusB family.

Involved in transcription antitermination. Required for transcription of ribosomal RNA (rRNA) genes. Binds specifically to the boxA antiterminator sequence of the ribosomal RNA (rrn) operons. The protein is Transcription antitermination protein NusB of Shewanella loihica (strain ATCC BAA-1088 / PV-4).